A 350-amino-acid polypeptide reads, in one-letter code: Sulfate-binding protein (350 aa).

A signal peptide spans 1–40 (MKTAWTRRSFLQSAALATATVITIAACGGNNQSSSGGSGQ).

The protein belongs to the prokaryotic sulfate-binding protein family.

It is found in the periplasm. Functionally, this protein specifically binds sulfate and is involved in its transmembrane transport. This Synechococcus elongatus (strain ATCC 33912 / PCC 7942 / FACHB-805) (Anacystis nidulans R2) protein is Sulfate-binding protein (sbpA).